A 92-amino-acid polypeptide reads, in one-letter code: Small ribosomal subunit protein uS19c (92 aa).

It belongs to the universal ribosomal protein uS19 family.

It is found in the plastid. Its function is as follows. Protein S19 forms a complex with S13 that binds strongly to the 16S ribosomal RNA. The polypeptide is Small ribosomal subunit protein uS19c (Cuscuta gronovii (Common dodder)).